Consider the following 200-residue polypeptide: ATP synthase subunit s, mitochondrial (200 aa).

The N-terminal 25 residues, 1 to 25 (MMPFGKISQQLCGVKKLPWSCDSRY), are a transit peptide targeting the mitochondrion. The N-terminal domain stretch occupies residues 1-61 (MMPFGKISQQ…SEWLLRCGAM (61 aa)). A Mg(2+)-binding site is contributed by glycine 59. 4 LRR repeats span residues 62 to 87 (VRYH…KYKI), 88 to 116 (QAID…KIRL), 117 to 141 (CKCH…KTIL), and 142 to 173 (EMEI…LSDL). Threonine 93 is a binding site for Mg(2+).

The protein belongs to the ATP synthase subunit s family. In terms of assembly, homotetramer. Associates with ATP synthase.

It localises to the mitochondrion. The protein localises to the mitochondrion inner membrane. Functionally, involved in regulation of mitochondrial membrane ATP synthase. Necessary for H(+) conduction of ATP synthase. Facilitates energy-driven catalysis of ATP synthesis by blocking a proton leak through an alternative proton exit pathway. In Homo sapiens (Human), this protein is ATP synthase subunit s, mitochondrial.